A 303-amino-acid chain; its full sequence is Uridylate-specific endoribonuclease C (303 aa).

An N-terminal signal peptide occupies residues 1–16; sequence MVYLVFLCLLPSLISG. Residues 32–303 form the EndoU domain; the sequence is TDAEIQSLAE…KRFVASSYPI (272 aa). Residues H181, H196, and K239 contribute to the active site. N-linked (GlcNAc...) asparagine glycosylation is present at N287.

This sequence belongs to the ENDOU family. In terms of assembly, monomer. Requires Mn(2+) as cofactor.

The protein resides in the secreted. It catalyses the reaction ribonucleotidyl-uridine-RNA = a 5'-end dephospho-uridine-RNA + a 3'-end 2',3'-cyclophospho-ribonucleotide-RNA. In terms of biological role, endoribonuclease that cleaves single-stranded RNAs at 5' of uridylates and releases a product with a 2',3'-cyclic phosphate at the 3'-end. The polypeptide is Uridylate-specific endoribonuclease C (endou-c) (Xenopus laevis (African clawed frog)).